The following is a 1356-amino-acid chain: Vascular endothelial growth factor receptor 2 (1356 aa).

Positions 1 to 19 (MQSKVLLAVALWLCVETRA) are cleaved as a signal peptide. Over 20–764 (ASVGLPSVSL…EGAQEKTNLE (745 aa)) the chain is Extracellular. 6 N-linked (GlcNAc...) asparagine glycosylation sites follow: N46, N66, N96, N143, N158, and N245. Ig-like C2-type domains follow at residues 46-110 (NTTL…ETDL), 141-207 (NKNK…INDE), 224-320 (YDVV…KNST), 328-414 (PFVA…HVVS), 421-548 (PQIG…FHVT), 551-660 (PEIT…RQLT), and 667-753 (PTIT…AFFI). C53 and C103 form a disulfide bridge. A disulfide bridge links C150 with C200. A disulfide bond links C246 and C307. 12 N-linked (GlcNAc...) asparagine glycosylation sites follow: N318, N374, N395, N511, N523, N580, N613, N619, N631, N675, N704, and N721. Intrachain disulfides connect C445/C530 and C571/C642. Residues C688 and C737 are joined by a disulfide bond. The chain crosses the membrane as a helical span at residues 765 to 785 (IIILVGTAVIAMFFWLLLVII). Residues 786–1356 (LRTVKRANGG…SGTTLSSPPV (571 aa)) are Cytoplasmic-facing. Position 801 is a phosphotyrosine (Y801). One can recognise a Protein kinase domain in the interval 834 to 1162 (LKLGKPLGRG…FSELVEHLGN (329 aa)). Residues 840 to 848 (LGRGAFGQV) and K868 each bind ATP. Position 951 is a phosphotyrosine; by autocatalysis (Y951). S982 and S984 each carry phosphoserine. Position 996 is a phosphotyrosine; by autocatalysis (Y996). C1024 and C1045 are joined by a disulfide. The active-site Proton acceptor is D1028. A phosphotyrosine; by autocatalysis mark is found at Y1054, Y1059, Y1175, and Y1214. 2 positions are modified to phosphoserine: S1231 and S1235. At T1238 the chain carries Phosphothreonine. The tract at residues 1274-1318 (DRTKLSPSFGGMVPSKSRESVASEGSNQTSGYQSGYHSDDTDTTV) is disordered. The span at 1296–1309 (SEGSNQTSGYQSGY) shows a compositional bias: polar residues. Phosphotyrosine; by autocatalysis is present on residues Y1305, Y1309, and Y1319.

The protein belongs to the protein kinase superfamily. Tyr protein kinase family. CSF-1/PDGF receptor subfamily. Homodimer in the presence of bound dimeric VEGFA, VEGFC or VEGFD ligands; monomeric in the absence of bound ligands. Can also form heterodimers with FLT1/VEGFR1 and KDR/VEGFR2. Interacts (tyrosine phosphorylated) with LFYN, NCK1, PLCG1. Interacts (tyrosine-phosphorylated active form preferentially) with DAB2IP (via C2 domain and active form preferentially); the interaction occurs at the late phase of VEGFA response and inhibits KDR/VEGFR2 activity. Interacts with SHBSH2D2A/TSAD, GRB2, MYOF, CBL and PDCD6. Interacts (via C-terminus domain) with ERN1 (via kinase domain); the interaction is facilitated in a XBP1 isoform 1- and vascular endothelial growth factor (VEGF)-dependent manner in endothelial cells. Interacts (via juxtamembrane region) with chaperone PDCL3 (via thioredoxin fold region); the interaction leads to increased KDR/VEGFR2 abundance through inhibition of its ubiquitination and degradation. Interacts (tyrosine phosphorylated) with CCDC88A/GIV (via SH2-like region); binding requires autophosphorylation of the KDR/VEGFR2 C-terminal region. Interacts with isoform 2 of BSG. Interacts with SLC31A1; this interaction is induced upon VEGFA stimulation leading to SLC31A1 and KDR subsequent co-internalization to early endosomes, thereby activating KDR downstream signaling in endothelial cells. As to quaternary structure, (Microbial infection) Interacts with HIV-1 Tat. N-glycosylated. In terms of processing, ubiquitinated. Tyrosine phosphorylation of the receptor promotes its poly-ubiquitination, leading to its degradation via the proteasome or lysosomal proteases. Post-translationally, autophosphorylated on tyrosine residues upon ligand binding. Autophosphorylation occurs in trans, i.e. one subunit of the dimeric receptor phosphorylates tyrosine residues on the other subunit. Phosphorylation at Tyr-951 is important for interaction with SH2D2A/TSAD and VEGFA-mediated reorganization of the actin cytoskeleton. Phosphorylation at Tyr-1175 is important for interaction with PLCG1 and SHB. Phosphorylation at Tyr-1214 is important for interaction with NCK1 and FYN. Dephosphorylated by PTPRB. Dephosphorylated by PTPRJ at Tyr-951, Tyr-996, Tyr-1054, Tyr-1059, Tyr-1175 and Tyr-1214. The inhibitory disulfide bond between Cys-1024 and Cys-1045 may serve as a specific molecular switch for H(2)S-induced modification that regulates KDR/VEGFR2 function. Detected in cornea (at protein level). Widely expressed.

The protein resides in the cell junction. It is found in the endoplasmic reticulum. The protein localises to the cell membrane. Its subcellular location is the cytoplasm. It localises to the nucleus. The protein resides in the cytoplasmic vesicle. It is found in the early endosome. The protein localises to the secreted. The catalysed reaction is L-tyrosyl-[protein] + ATP = O-phospho-L-tyrosyl-[protein] + ADP + H(+). With respect to regulation, present in an inactive conformation in the absence of bound ligand. Binding of VEGFA, VEGFC or VEGFD leads to dimerization and activation by autophosphorylation on tyrosine residues. Inhibited by the small molecule PTK inhibitor SU5614 ((3Z)-5-Chloro-3-[(3,5-dimethyl-1H-pyrrol-2-yl)methylene]-1,3-dihydro-2H-indol-2-one). May be regulated by hydrogen sulfide (H(2)S) levels via a H(2)S-sensitive intracellular disulfide bond. Tyrosine-protein kinase that acts as a cell-surface receptor for VEGFA, VEGFC and VEGFD. Plays an essential role in the regulation of angiogenesis, vascular development, vascular permeability, and embryonic hematopoiesis. Promotes proliferation, survival, migration and differentiation of endothelial cells. Promotes reorganization of the actin cytoskeleton. Isoforms lacking a transmembrane domain, such as isoform 2 and isoform 3, may function as decoy receptors for VEGFA, VEGFC and/or VEGFD. Isoform 2 plays an important role as negative regulator of VEGFA- and VEGFC-mediated lymphangiogenesis by limiting the amount of free VEGFA and/or VEGFC and preventing their binding to FLT4. Modulates FLT1 and FLT4 signaling by forming heterodimers. Binding of vascular growth factors to isoform 1 leads to the activation of several signaling cascades. Activation of PLCG1 leads to the production of the cellular signaling molecules diacylglycerol and inositol 1,4,5-trisphosphate and the activation of protein kinase C. Mediates activation of MAPK1/ERK2, MAPK3/ERK1 and the MAP kinase signaling pathway, as well as of the AKT1 signaling pathway. Mediates phosphorylation of PIK3R1, the regulatory subunit of phosphatidylinositol 3-kinase, reorganization of the actin cytoskeleton and activation of PTK2/FAK1. Required for VEGFA-mediated induction of NOS2 and NOS3, leading to the production of the signaling molecule nitric oxide (NO) by endothelial cells. Phosphorylates PLCG1. Promotes phosphorylation of FYN, NCK1, NOS3, PIK3R1, PTK2/FAK1 and SRC. The polypeptide is Vascular endothelial growth factor receptor 2 (Homo sapiens (Human)).